We begin with the raw amino-acid sequence, 682 residues long: Connectin (682 aa).

The signal sequence occupies residues 1–24; sequence MATLADSAICFLLLSLLLIGACLV. The segment at 29 to 54 is disordered; it reads GRAKDDRRTRGRGSSSGVLSSSSSSS. Residues 40-54 are compositionally biased toward low complexity; that stretch reads RGSSSGVLSSSSSSS. LRR repeat units follow at residues 149–172, 173–196, 199–220, 223–244, 247–268, 271–292, 295–316, 319–342, 343–364, 367–388, and 389–404; these read LRELKFVIQNNARLDYIPTMIIEP, LKNLSSIVIEYSQVEIVKSYAFAN, FLERIILNNNHIMALDQDAFAN, RLRELNLEHNQIFEMDRYAFRN, LCERLFLNNNNISTLHEGLFAD, RLTFLNLAHNQINVLTSEIFRG, NLNVLKLTRNNLNFIGDTVFAE, SLSELELDDNRIERISERALDGLN, TLKTLNLRNNLLKKIDNGLLRG, ALLSINVQANKLETLTFYTFQP, and IMDNLVNSTSELLVSD. An LRRCT domain is found at 405–462; sequence NKFICDCRLQWIFELKNRTRHLQLRDSLEDLHCTLQEPKLSHFVDPVPPTILDVLNIG. Residues 503-536 form a disordered region; it reads RQALRGQRQFASSAENVVESKMRRRRKRQEEVKE. The GPI-anchor amidated alanine moiety is linked to residue Ala-658. The propeptide at 659–682 is removed in mature form; sequence GANSLAQGMTIIVSLVALMMISRG.

As to expression, predominantly expressed in abdominal and thoracic segment muscle and motorneuron cells.

It localises to the cell membrane. Cell adhesion protein involved in target recognition during neuromuscular development. Mediates homophilic cellular adhesion. The chain is Connectin (Con) from Drosophila melanogaster (Fruit fly).